We begin with the raw amino-acid sequence, 143 residues long: Ribonuclease P protein component (143 aa).

The disordered stretch occupies residues 111-143 (RVKRKGGGPGGNRRSAPPGSAPLTDDGRLRGEP).

It belongs to the RnpA family. Consists of a catalytic RNA component (M1 or rnpB) and a protein subunit.

It catalyses the reaction Endonucleolytic cleavage of RNA, removing 5'-extranucleotides from tRNA precursor.. In terms of biological role, RNaseP catalyzes the removal of the 5'-leader sequence from pre-tRNA to produce the mature 5'-terminus. It can also cleave other RNA substrates such as 4.5S RNA. The protein component plays an auxiliary but essential role in vivo by binding to the 5'-leader sequence and broadening the substrate specificity of the ribozyme. The chain is Ribonuclease P protein component from Deinococcus geothermalis (strain DSM 11300 / CIP 105573 / AG-3a).